We begin with the raw amino-acid sequence, 439 residues long: Adenylosuccinate synthetase (439 aa).

GTP is bound by residues 14–20 and 42–44; these read GDEGKGK and GHT. D15 functions as the Proton acceptor in the catalytic mechanism. Positions 15 and 42 each coordinate Mg(2+). IMP contacts are provided by residues 15–18, 40–43, T130, R144, Q225, T240, and R304; these read DEGK and NAGH. H43 serves as the catalytic Proton donor. 300-306 serves as a coordination point for substrate; it reads TTTGRRR. GTP is bound by residues R306, 332–334, and 414–416; these read KLD and SLG.

Belongs to the adenylosuccinate synthetase family. As to quaternary structure, homodimer. Requires Mg(2+) as cofactor.

It is found in the cytoplasm. The enzyme catalyses IMP + L-aspartate + GTP = N(6)-(1,2-dicarboxyethyl)-AMP + GDP + phosphate + 2 H(+). The protein operates within purine metabolism; AMP biosynthesis via de novo pathway; AMP from IMP: step 1/2. Functionally, plays an important role in the de novo pathway of purine nucleotide biosynthesis. Catalyzes the first committed step in the biosynthesis of AMP from IMP. This is Adenylosuccinate synthetase from Synechococcus sp. (strain CC9902).